An 895-amino-acid chain; its full sequence is DNA double-strand break repair Rad50 ATPase (895 aa).

ATP contacts are provided by residues 32–38 (NGAGKSS) and Gln-137. The stretch at 183–253 (SDYDYLKNEL…LNAQLETIKK (71 aa)) forms a coiled coil. In terms of domain architecture, Zinc-hook spans 411-507 (RAEINSSLMQ…ERKHQKKLLD (97 aa)). Positions 455 and 458 each coordinate Zn(2+). Coiled coils occupy residues 464-510 (TEKS…DRIN) and 618-647 (ENSL…AMDE).

This sequence belongs to the SMC family. RAD50 subfamily. Homodimer. Forms a heterotetramer composed of two Mre11 subunits and two Rad50 subunits. Requires Zn(2+) as cofactor.

In terms of biological role, part of the Rad50/Mre11 complex, which is involved in the early steps of DNA double-strand break (DSB) repair. The complex may facilitate opening of the processed DNA ends to aid in the recruitment of HerA and NurA. Rad50 controls the balance between DNA end bridging and DNA resection via ATP-dependent structural rearrangements of the Rad50/Mre11 complex. This chain is DNA double-strand break repair Rad50 ATPase, found in Thermoplasma volcanium (strain ATCC 51530 / DSM 4299 / JCM 9571 / NBRC 15438 / GSS1).